The following is a 108-amino-acid chain: T cell receptor alpha variable 1-1 (108 aa).

Residues 1-18 (MWGAFLLYVSMKMGGTAG) form the signal peptide. The Ig-like domain occupies 19 to 108 (QSLEQPSEVT…DSASYFCAVR (90 aa)). Asn38 carries an N-linked (GlcNAc...) asparagine glycan. A disulfide bridge connects residues Cys39 and Cys105.

As to quaternary structure, alpha-beta TR is a heterodimer composed of an alpha and beta chain; disulfide-linked. The alpha-beta TR is associated with the transmembrane signaling CD3 coreceptor proteins to form the TR-CD3 (TcR or TCR). The assembly of alpha-beta TR heterodimers with CD3 occurs in the endoplasmic reticulum where a single alpha-beta TR heterodimer associates with one CD3D-CD3E heterodimer, one CD3G-CD3E heterodimer and one CD247 homodimer forming a stable octameric structure. CD3D-CD3E and CD3G-CD3E heterodimers preferentially associate with TR alpha and TR beta chains, respectively. The association of the CD247 homodimer is the last step of TcR assembly in the endoplasmic reticulum and is required for transport to the cell surface.

The protein resides in the cell membrane. In terms of biological role, v region of the variable domain of T cell receptor (TR) alpha chain that participates in the antigen recognition. Alpha-beta T cell receptors are antigen specific receptors which are essential to the immune response and are present on the cell surface of T lymphocytes. Recognize peptide-major histocompatibility (MH) (pMH) complexes that are displayed by antigen presenting cells (APC), a prerequisite for efficient T cell adaptive immunity against pathogens. Binding of alpha-beta TR to pMH complex initiates TR-CD3 clustering on the cell surface and intracellular activation of LCK that phosphorylates the ITAM motifs of CD3G, CD3D, CD3E and CD247 enabling the recruitment of ZAP70. In turn ZAP70 phosphorylates LAT, which recruits numerous signaling molecules to form the LAT signalosome. The LAT signalosome propagates signal branching to three major signaling pathways, the calcium, the mitogen-activated protein kinase (MAPK) kinase and the nuclear factor NF-kappa-B (NF-kB) pathways, leading to the mobilization of transcription factors that are critical for gene expression and essential for T cell growth and differentiation. The T cell repertoire is generated in the thymus, by V-(D)-J rearrangement. This repertoire is then shaped by intrathymic selection events to generate a peripheral T cell pool of self-MH restricted, non-autoaggressive T cells. Post-thymic interaction of alpha-beta TR with the pMH complexes shapes TR structural and functional avidity. This Homo sapiens (Human) protein is T cell receptor alpha variable 1-1.